A 207-amino-acid chain; its full sequence is Ras-related protein Rab-7a (207 aa).

At threonine 2 the chain carries N-acetylthreonine. The GTP site is built by serine 17, glycine 18, valine 19, glycine 20, lysine 21, threonine 22, serine 23, serine 34, asparagine 35, tyrosine 37, and threonine 40. Residue threonine 22 coordinates Mg(2+). The Switch 1 signature appears at 28–41 (YVNKKFSNQYKATI). 2 residues coordinate Mg(2+): threonine 40 and aspartate 63. Glycine 66 provides a ligand contact to GTP. The Switch 2 motif lies at 67-82 (QERFQSLGVAFYRGAD). Serine 72 carries the post-translational modification Phosphoserine. Asparagine 125, lysine 126, aspartate 128, alanine 156, and lysine 157 together coordinate GTP. Residues lysine 191 and lysine 194 each participate in a glycyl lysine isopeptide (Lys-Gly) (interchain with G-Cter in ubiquitin) cross-link. Residues cysteine 205 and cysteine 207 are each lipidated (S-geranylgeranyl cysteine). Cysteine 207 carries the cysteine methyl ester modification.

This sequence belongs to the small GTPase superfamily. Rab family. Interacts with NTRK1/TRKA. Interacts with RILP. Interacts with PSMA7. Interacts with RNF115. Interacts with and FYCO1. Interacts with the PIK3C3/VPS34-PIK3R4 complex. The GTP-bound form interacts with OSBPL1A. The GTP-bound form interacts with RAC1. Interacts with CLN3. Interacts with CHM, the substrate-binding subunit of the Rab geranylgeranyltransferase complex. Interacts with C9orf72. Does not interact with HPS4 and the BLOC-3 complex (heterodimer of HPS1 and HPS4). Interacts with CLN5. Interacts with PLEKHM1 (via N- and C-terminus). Interacts with PRPH; the interaction is direct. Interacts with VPS13A. The GDP-bound form interacts with RIMOC1. Interacts with the MON1A-CCZ1B complex and this interaction is enhanced in the presence of RIMOC1. Interacts with VPS39 and VPS41. Forms a ternary complex with LAMP2 and RUFY4; the interaction with LAMP2 is mediated by RUFY4 (via RUN and coiled coil domains). The cofactor is Mg(2+). Deubiquitination at Lys-191 and Lys-194 by USP32. Post-translationally, phosphorylated at Ser-72 by LRRK1; phosphorylation is dependent on protein kinase C (PKC) activation of LRRK1. In terms of processing, prenylated. Prenylation is required for association with cellular membranes. As to expression, expressed in osteoclasts and in neurons.

The protein resides in the cytoplasmic vesicle. The protein localises to the phagosome membrane. Its subcellular location is the late endosome membrane. It localises to the lysosome membrane. It is found in the melanosome membrane. The protein resides in the autophagosome membrane. The protein localises to the lipid droplet. Its subcellular location is the endosome membrane. It localises to the mitochondrion membrane. The enzyme catalyses GTP + H2O = GDP + phosphate + H(+). Regulated by guanine nucleotide exchange factors (GEFs) which promote the exchange of bound GDP for free GTP. Regulated by GTPase activating proteins (GAPs) which increase the GTP hydrolysis activity. Inhibited by GDP dissociation inhibitors (GDIs). Its function is as follows. The small GTPases Rab are key regulators of intracellular membrane trafficking, from the formation of transport vesicles to their fusion with membranes. Rabs cycle between an inactive GDP-bound form and an active GTP-bound form that is able to recruit to membranes different sets of downstream effectors directly responsible for vesicle formation, movement, tethering and fusion. In its active state, RAB7A binds to a variety of effector proteins playing a key role in the regulation of endo-lysosomal trafficking. Governs early-to-late endosomal maturation, microtubule minus-end as well as plus-end directed endosomal migration and positioning, and endosome-lysosome transport through different protein-protein interaction cascades. Also plays a central role in growth-factor-mediated cell signaling, nutrient-transporter-mediated nutrient uptake, neurotrophin transport in the axons of neurons and lipid metabolism. Also involved in regulation of some specialized endosomal membrane trafficking, such as maturation of melanosomes, pathogen-induced phagosomes (or vacuoles) and autophagosomes. Plays a role in the maturation and acidification of phagosomes that engulf pathogens, such as S.aureus and Mycobacteria. Plays a role in the fusion of phagosomes with lysosomes. In concert with RAC1, plays a role in regulating the formation of RBs (ruffled borders) in osteoclasts. Controls the endosomal trafficking and neurite outgrowth signaling of NTRK1/TRKA. Regulates the endocytic trafficking of the EGF-EGFR complex by regulating its lysosomal degradation. Involved in the ADRB2-stimulated lipolysis through lipophagy, a cytosolic lipase-independent autophagic pathway. Required for the exosomal release of SDCBP, CD63 and syndecan. Required for vesicular trafficking and cell surface expression of ACE2. May play a role in PRPH neuronal intermediate filament assembly. The sequence is that of Ras-related protein Rab-7a from Rattus norvegicus (Rat).